We begin with the raw amino-acid sequence, 175 residues long: Vitamin K epoxide reductase complex subunit 1-like protein 1 (175 aa).

At 1-12 (MAAPVLRVSTPR) the chain is on the cytoplasmic side. A helical transmembrane segment spans residues 13–35 (WERIARVLVCLLGILLSLYAFHV). The Lumenal portion of the chain corresponds to 36–86 (EREHARDPSYKALCDVSSSISCSKVFGSRWGRGFGLLGSIFGNDSALNQPN). Cys-49 and Cys-57 are joined by a disulfide. Asn-86 is a binding site for (S)-warfarin. The helical transmembrane segment at 87–101 (SVYGIVFYAFQLLLG) threads the bilayer. Topologically, residues 102-106 (MTVSA) are cytoplasmic. The helical transmembrane segment at 107–134 (MAALILMTTSIMSVVGSLYLGYILYFVL) threads the bilayer. Over 135-137 (KDL) the chain is Lumenal. Cys-138 and Cys-141 are disulfide-bonded. The chain crosses the membrane as a helical span at residues 138 to 159 (CVICVTTYALNFILFVLNYKRL). Residues Cys-141 and Tyr-145 each coordinate phylloquinone. Tyr-145 contributes to the (S)-warfarin binding site. Residues 160-175 (VYLNEAWKQKLQAKQD) are Cytoplasmic-facing.

It belongs to the VKOR family.

Its subcellular location is the endoplasmic reticulum membrane. The catalysed reaction is phylloquinone + [protein]-disulfide + H2O = 2,3-epoxyphylloquinone + [protein]-dithiol. It carries out the reaction phylloquinol + [protein]-disulfide = phylloquinone + [protein]-dithiol. With respect to regulation, inhibited by warfarin (coumadin). Warfarin locks VKORC1 in both redox states into the closed conformation. In terms of biological role, involved in vitamin K metabolism. Can reduce inactive vitamin K 2,3-epoxide to active vitamin K, and may contribute to vitamin K-mediated protection against oxidative stress. Plays a role in vitamin K-dependent gamma-carboxylation of Glu residues in target proteins. The polypeptide is Vitamin K epoxide reductase complex subunit 1-like protein 1 (vkorc1l1) (Takifugu rubripes (Japanese pufferfish)).